Reading from the N-terminus, the 317-residue chain is tRNA dimethylallyltransferase (317 aa).

14-21 (GPTASGKS) provides a ligand contact to ATP. Position 16 to 21 (16 to 21 (TASGKS)) interacts with substrate. Interaction with substrate tRNA stretches follow at residues 39 to 42 (DSVL) and 163 to 167 (QRIQR).

This sequence belongs to the IPP transferase family. Monomer. Requires Mg(2+) as cofactor.

It carries out the reaction adenosine(37) in tRNA + dimethylallyl diphosphate = N(6)-dimethylallyladenosine(37) in tRNA + diphosphate. Its function is as follows. Catalyzes the transfer of a dimethylallyl group onto the adenine at position 37 in tRNAs that read codons beginning with uridine, leading to the formation of N6-(dimethylallyl)adenosine (i(6)A). The protein is tRNA dimethylallyltransferase of Xylella fastidiosa (strain 9a5c).